The primary structure comprises 243 residues: MRSGVIAQKVGMTRVFTETGEHIPVTVLKLGNCQVLGHRTTEKNGYVAMQLGSGTRKTVYLPKAERGQFAVAKVEPKRKVAEFRVSEDALIPVGAEIQADHFVVGQFVDVTGTSVGKGFAGGIKRWNFGGLRATHGVSVSHRSIGSTGGRQDPGKTFKNKKMPGHMGVDRITTLNLRVVQTDVARGLILVEGAVPGSKGGWIAVRDAVKKVLPADAPKPGKFRLADGGGEQTAAAPAAEQEGV.

Disordered regions lie at residues 139-164 and 218-243; these read VSHR…KMPG and KPGK…QEGV. Residue Q151 is modified to N5-methylglutamine. Residues 231–243 show a composition bias toward low complexity; that stretch reads QTAAAPAAEQEGV.

The protein belongs to the universal ribosomal protein uL3 family. As to quaternary structure, part of the 50S ribosomal subunit. Forms a cluster with proteins L14 and L19. Methylated by PrmB.

Its function is as follows. One of the primary rRNA binding proteins, it binds directly near the 3'-end of the 23S rRNA, where it nucleates assembly of the 50S subunit. This chain is Large ribosomal subunit protein uL3, found in Rhodopseudomonas palustris (strain BisB18).